The following is a 793-amino-acid chain: Pentatricopeptide repeat-containing protein At1g03100, mitochondrial (793 aa).

The transit peptide at 1-87 (MFSLRKTKLQ…REAISSISGS (87 aa)) directs the protein to the mitochondrion. 11 PPR repeats span residues 257–291 (NTQVLNVALAGCLLFGTTRKAEQLLDMIPKIGVKA), 292–322 (DANLLVIMAHIYERNGRREELRKLQRHIDEA), 330–364 (FWQFYNCLLMCHLKFGDLESASKMVLEMLRRGKVA), 458–492 (TEEIYVKLAKAFLESGKMKELAKFLLKAEHEDSPV), 495–529 (DNSMLINVINACISLGMLDQAHDLLDEMRMAGVRT), 530–564 (GSSVYSSLLKAYCNTNQTREVTSLLRDAQKAGIQL), 565–599 (DSSCYEALIQSQVIQNDTHGALNVFKEMKEAKILR), 601–631 (GNQKFEKLLKGCEGNAEAGLMSKLLREIREV), 637–671 (GVHDWNNVIHFFSKKGLMQDAEKALKRMRSLGHSP), 672–707 (NAQTFHSMVTGYAAIGSKYTEVTELWGEMKSIAAAT), and 713–747 (DQELLDAVLYTFVRGGFFSRANEVVEMMEKKNMFV).

The protein belongs to the PPR family. P subfamily.

The protein localises to the mitochondrion. In Arabidopsis thaliana (Mouse-ear cress), this protein is Pentatricopeptide repeat-containing protein At1g03100, mitochondrial.